We begin with the raw amino-acid sequence, 755 residues long: Catalase-peroxidase (755 aa).

A cross-link (tryptophyl-tyrosyl-methioninium (Trp-Tyr) (with M-267)) is located at residues 93 to 241 (WHSAGTYRVF…LAAAHMGLIY (149 aa)). The active-site Proton acceptor is the His-94. The segment at residues 241–267 (YVNPEGPDGNPDPVAAARDIRVTFGRM) is a cross-link (tryptophyl-tyrosyl-methioninium (Tyr-Met) (with W-93)). His-282 provides a ligand contact to heme b.

It belongs to the peroxidase family. Peroxidase/catalase subfamily. In terms of assembly, homodimer or homotetramer. Heme b is required as a cofactor. Formation of the three residue Trp-Tyr-Met cross-link is important for the catalase, but not the peroxidase activity of the enzyme.

The protein localises to the cytoplasm. It catalyses the reaction H2O2 + AH2 = A + 2 H2O. It carries out the reaction 2 H2O2 = O2 + 2 H2O. Bifunctional enzyme with both catalase and broad-spectrum peroxidase activity. This Podospora anserina (strain S / ATCC MYA-4624 / DSM 980 / FGSC 10383) (Pleurage anserina) protein is Catalase-peroxidase.